The sequence spans 215 residues: MNKYLEYPEVESKETPPQKLVVLLHGIGSDGHDLIGLVPYIKNDLQNCHFISPHGIEDYDMMPYGRQWFSLRDRSPHIIATLIANNISKLEDIIREKQTELNLTNKDTVIIGFSQGTMIGLYLTLVQQAPFFCTIGFAGALIPPMKINNKLTPICLIHGALDQVIDVSEMYNASNYLSKLNIEHSVHKLTSLAHSIDGRGLEIAINFINTCHNMV.

Active-site charge relay system residues include S114, D162, and H194.

This sequence belongs to the AB hydrolase superfamily. AB hydrolase 2 family.

This is an uncharacterized protein from Rickettsia typhi (strain ATCC VR-144 / Wilmington).